Reading from the N-terminus, the 408-residue chain is 5-hydroxytryptamine receptor 1A (408 aa).

Residues Met-1–Ile-32 are Extracellular-facing. Asn-5 and Asn-6 each carry an N-linked (GlcNAc...) asparagine glycan. The chain crosses the membrane as a helical span at residues Ala-33–Ala-53. At Ala-54–Tyr-67 the chain is on the cytoplasmic side. Residues Leu-68–Val-92 form a helical membrane-spanning segment. At Leu-93–Val-101 the chain is on the extracellular side. The chain crosses the membrane as a helical span at residues Thr-102 to Leu-126. The cysteines at positions 103 and 181 are disulfide-linked. Serotonin is bound by residues Asp-110 and Cys-114. A DRY motif; important for ligand-induced conformation changes motif is present at residues Asp-127–Tyr-129. Over Asp-127–Arg-146 the chain is Cytoplasmic. The helical transmembrane segment at Ala-147–Gly-168 threads the bilayer. The Extracellular portion of the chain corresponds to Trp-169–Pro-187. A helical membrane pass occupies residues Gly-188–Gly-210. Residues Lys-211–Thr-333 lie on the Cytoplasmic side of the membrane. A disordered region spans residues Thr-235–Leu-255. Positions 332, 333, and 339 each coordinate 1D-myo-inositol 4-phosphate. Residues Leu-334–Phe-357 traverse the membrane as a helical segment. The Extracellular portion of the chain corresponds to Cys-358–Pro-364. The chain crosses the membrane as a helical span at residues His-365 to Phe-389. The NPxxY motif; important for ligand-induced conformation changes and signaling signature appears at Asn-382–Tyr-386. Residues Phe-389, Asn-390, and Lys-391 each contribute to the 1D-myo-inositol 4-phosphate site. At Asn-390–Gln-408 the chain is on the cytoplasmic side.

Belongs to the G-protein coupled receptor 1 family. 5-hydroxytryptamine receptor subfamily. HTR1A sub-subfamily. As to expression, first expressed in the rostral part of the brain stem at stage 22. At later stages of development, expression is localized to serotonergic neurons. The expression pattern changes in the tadpole of stage 41 where, in addition to serotonergic neurons, expression is also localized to the inner nuclear layer (INL) of the developing retina. This expression pattern continues through to the start of metamorphosis (stage 46). In adults, expressed in the brain, in particular the telencephalon, diencephalon and mesencephalon. In the telencephalic region, expression is localized to the lateral, dorsal and medial pallium, and in the striatum, septum and amygdala. In the mesencephalic region, expression is strongest in the optic tectum and torus semicircularis with moderate levels of expression in tegmental nuclei. In diencephalon, localized to the dorsal and ventral thalamus and the preoptic area of the hypothalamus.

It is found in the cell membrane. Its activity is regulated as follows. G-protein coupled receptor activity is regulated by lipids: phosphatidylinositol 4-phosphate increases HTR1A-mediated activity. Functionally, G-protein coupled receptor for 5-hydroxytryptamine (serotonin). Also functions as a receptor for various drugs and psychoactive substances. Ligand binding causes a conformation change that triggers signaling via guanine nucleotide-binding proteins (G proteins) and modulates the activity of downstream effectors, such as adenylate cyclase. HTR1A is coupled to G(i)/G(o) G alpha proteins and mediates inhibitory neurotransmission: signaling inhibits adenylate cyclase activity and activates a phosphatidylinositol-calcium second messenger system that regulates the release of Ca(2+) ions from intracellular stores. Beta-arrestin family members regulate signaling by mediating both receptor desensitization and resensitization processes. Activation of the receptor may play a role in the exit from G0 phase and in promoting DNA synthesis. This Xenopus laevis (African clawed frog) protein is 5-hydroxytryptamine receptor 1A.